The primary structure comprises 230 residues: Ribonuclease 3 (230 aa).

Positions 5-125 (YSRFYNILGY…VIGAIYLDSD (121 aa)) constitute an RNase III domain. A Mg(2+)-binding site is contributed by Glu40. Residue Asp44 is part of the active site. Asp111 and Glu114 together coordinate Mg(2+). Residue Glu114 is part of the active site. In terms of domain architecture, DRBM spans 153 to 223 (DSKSKLQEIL…AEKMIEMLSQ (71 aa)).

Belongs to the ribonuclease III family. Homodimer. Mg(2+) serves as cofactor.

It is found in the cytoplasm. It carries out the reaction Endonucleolytic cleavage to 5'-phosphomonoester.. Its function is as follows. Digests double-stranded RNA. Involved in the processing of primary rRNA transcript to yield the immediate precursors to the large and small rRNAs (23S and 16S). Processes some mRNAs, and tRNAs when they are encoded in the rRNA operon. Processes pre-crRNA and tracrRNA of type II CRISPR loci if present in the organism. This is Ribonuclease 3 from Francisella tularensis subsp. holarctica (strain FTNF002-00 / FTA).